The following is a 338-amino-acid chain: Glyceraldehyde-3-phosphate dehydrogenase 2 (338 aa).

NAD(+)-binding positions include 13 to 14 (RI), D35, and R80. D-glyceraldehyde 3-phosphate contacts are provided by residues 151-153 (SCT), T182, 211-212 (TG), and R234. Residue C152 is the Nucleophile of the active site. N316 contributes to the NAD(+) binding site.

This sequence belongs to the glyceraldehyde-3-phosphate dehydrogenase family. In terms of assembly, homotetramer.

It localises to the cytoplasm. The catalysed reaction is D-glyceraldehyde 3-phosphate + phosphate + NAD(+) = (2R)-3-phospho-glyceroyl phosphate + NADH + H(+). Its pathway is carbohydrate degradation; glycolysis; pyruvate from D-glyceraldehyde 3-phosphate: step 1/5. Inhibited by koningic acid through the interaction of cysteine residues with koningic acid even at very low concentrations. The polypeptide is Glyceraldehyde-3-phosphate dehydrogenase 2 (gpd2) (Trichoderma koningii (Hypocrea koningii)).